We begin with the raw amino-acid sequence, 131 residues long: Methylglyoxal synthase (131 aa).

Positions 1-131 (MKIALIAHDK…GDLDYRKLRK (131 aa)) constitute an MGS-like domain. Substrate-binding positions include histidine 8, lysine 12, 34 to 37 (TGTT), and 54 to 55 (SG). The active-site Proton donor/acceptor is the aspartate 60. Position 87 (histidine 87) interacts with substrate.

The protein belongs to the methylglyoxal synthase family.

The enzyme catalyses dihydroxyacetone phosphate = methylglyoxal + phosphate. Its function is as follows. Catalyzes the formation of methylglyoxal from dihydroxyacetone phosphate. This is Methylglyoxal synthase from Bacillus anthracis (strain A0248).